The primary structure comprises 135 residues: Nucleoside diphosphate kinase (135 aa).

The ATP site is built by Lys-10, Phe-58, Arg-86, Thr-92, Arg-103, and Asn-113. The Pros-phosphohistidine intermediate role is filled by His-116.

It belongs to the NDK family. In terms of assembly, homotetramer. The cofactor is Mg(2+).

It is found in the cytoplasm. It catalyses the reaction a 2'-deoxyribonucleoside 5'-diphosphate + ATP = a 2'-deoxyribonucleoside 5'-triphosphate + ADP. The catalysed reaction is a ribonucleoside 5'-diphosphate + ATP = a ribonucleoside 5'-triphosphate + ADP. Major role in the synthesis of nucleoside triphosphates other than ATP. The ATP gamma phosphate is transferred to the NDP beta phosphate via a ping-pong mechanism, using a phosphorylated active-site intermediate. This chain is Nucleoside diphosphate kinase, found in Nocardioides sp. (strain ATCC BAA-499 / JS614).